A 429-amino-acid polypeptide reads, in one-letter code: Mannose-6-phosphate isomerase (429 aa).

Residues glutamine 109, histidine 111, glutamate 136, and histidine 281 each coordinate Zn(2+). Residue arginine 300 is part of the active site.

This sequence belongs to the mannose-6-phosphate isomerase type 1 family. Requires Zn(2+) as cofactor.

The protein localises to the cytoplasm. It carries out the reaction D-mannose 6-phosphate = D-fructose 6-phosphate. It participates in nucleotide-sugar biosynthesis; GDP-alpha-D-mannose biosynthesis; alpha-D-mannose 1-phosphate from D-fructose 6-phosphate: step 1/2. Its function is as follows. Involved in the synthesis of the GDP-mannose and dolichol-phosphate-mannose required for a number of critical mannosyl transfer reactions. The chain is Mannose-6-phosphate isomerase (PMI1) from Eremothecium gossypii (strain ATCC 10895 / CBS 109.51 / FGSC 9923 / NRRL Y-1056) (Yeast).